Consider the following 175-residue polypeptide: MKDLSIRNDMAPTVSLLYSAVEENSLRLASIVSHMTHSELYYKGRCQTKNSTAQLLHHITNVDIRWVWRIKENRIPDHIEQAYGPMTDESGRLPEPVNQPDLDELLKRHQHVVEKLKSVCFTLTENALNQPLSFEGDTATIRWGIWHMADHNRYHQAHIEALKKEWKQDVAKYER.

This is an uncharacterized protein from Bacillus subtilis (strain 168).